Consider the following 24-residue polypeptide: YIELAVVADHGIFTKYNSNLNTIR.

The 24-residue stretch at 1–24 (YIELAVVADHGIFTKYNSNLNTIR) folds into the Peptidase M12B domain. E3 contributes to the Ca(2+) binding site.

It belongs to the venom metalloproteinase (M12B) family. P-I subfamily. In terms of assembly, monomer. Requires Zn(2+) as cofactor. Post-translationally, the N-terminus is blocked. In terms of processing, contains 3 disulfide bonds. Expressed by the venom gland.

It localises to the secreted. Inhibited by EDTA, and o-phenanthroline, but not inhibited by PMSF, pepstatin A, and aprotinin. Zinc metalloproteinase that exhits a weak hemorrhagic activity. Degrades preferentially the Aalpha- (FGA) and Bbeta-chains (FGB) of fibrinogen, and partially degrades gamma-chain (FGG) at higher concentration. Induces a mild myotoxicity, but lacks coagulant activity on human plasma or bovin fibrinogen and defibrinating activity. The chain is Snake venom metalloproteinase Batx-1 from Bothrops atrox (Barba amarilla).